Reading from the N-terminus, the 371-residue chain is Putative ribonuclease 3 (371 aa).

Positions 10–136 (AKSVKDKYIP…FLGAVCMAVD (127 aa)) constitute an RNase III domain.

This sequence belongs to the IIV-6 142R family.

The catalysed reaction is Endonucleolytic cleavage to 5'-phosphomonoester.. Its function is as follows. Digests double-stranded RNA. This chain is Putative ribonuclease 3, found in Frog virus 3 (isolate Goorha) (FV-3).